An 877-amino-acid polypeptide reads, in one-letter code: MNDMYAALRGNVGMLGHLLGKTIKEHLGDEFLDKIENIRQLAKSSRQGNEEDRQKLITTLKNLSDDELLPVARAFSQFLNLANVAEQFHSMSRQGELHTTLDPLDSLFDKLKNANLSEQEIIDTVCELDIELVLTAHPTEVTRRTLIHKHVQLNECLEELELQDLTPRECKFIQHRIEQLVNQSWHTNEIREQRPTPVDEAKWGFAVIENNLWPAIPLFLRQLDDRLQENFGIRLPLRAHPVRIASWMGGDRDGNPFVTAKVTQEVLLLSRWVAINLFLTDIQELVSELSMTDCNEELRQRVGECSEPYRAILRVVRDSLRETQQAVTAKLQGQYTENRDLITRTEQLREPLELCYRSLQSCGMSIIADGMLLDVLRKLACFGVNLLKLDIRQDGERHGQVLSELTQYLELGDYAEWRETEKQEFLLKELASRRPLLPANWQPSAESQEVVDTCRVIAQTDPDAFGIYIISMARQPSDVLAVQLLLKEVGCKFHMPIAPLFETQNDLQNAAAVLNRLLSVEWYRNYIRGQQYVMIGYSDSAKDAGMMSAGWAQYRAMEDLVAIAEREDLKLTLFHGRGGTIGRGGGPAHQAILSQPPGSLKGGFRVTEQGEMIRFKFGLPEVAIHNFKLYTSAVLEANLLPPPKPEAAWYDVMDKLSEISCQHYRSIVRDEPDFVPYFRAATPEMELGKLPLGSRPSKRKPNGGVESLRAIPWIFAWTQNRLMLPSWLGAHVALQAVMDEGKEDLLKEMDQQWPFFHTRLEMLEMVFLKADLWLAEYYDLRLAPENLWPLGKRLRQELQDSINVVLQLLPKRGELLDDQPWIKESIKLRNPYTDPLNVLQVELLHRSRATPDEVNPQVDQALMVTIAGIAAGMRNTG.

Catalysis depends on residues His137 and Lys542.

The protein belongs to the PEPCase type 1 family. Mg(2+) serves as cofactor.

The catalysed reaction is oxaloacetate + phosphate = phosphoenolpyruvate + hydrogencarbonate. Its function is as follows. Forms oxaloacetate, a four-carbon dicarboxylic acid source for the tricarboxylic acid cycle. This Tolumonas auensis (strain DSM 9187 / NBRC 110442 / TA 4) protein is Phosphoenolpyruvate carboxylase.